A 252-amino-acid polypeptide reads, in one-letter code: Urease accessory protein UreD (252 aa).

This sequence belongs to the UreD family. In terms of assembly, ureD, UreF and UreG form a complex that acts as a GTP-hydrolysis-dependent molecular chaperone, activating the urease apoprotein by helping to assemble the nickel containing metallocenter of UreC. The UreE protein probably delivers the nickel.

It localises to the cytoplasm. In terms of biological role, required for maturation of urease via the functional incorporation of the urease nickel metallocenter. In Streptomyces avermitilis (strain ATCC 31267 / DSM 46492 / JCM 5070 / NBRC 14893 / NCIMB 12804 / NRRL 8165 / MA-4680), this protein is Urease accessory protein UreD.